Here is a 479-residue protein sequence, read N- to C-terminus: MKHPAYTLLLSLIMSMCAGSKGLAEQLTKENLTVSLLPPNFHKENTVTNDWIPEGEEDDDYLDLEKLLSEDDDYIYVVDAVSPTDSESSAGNILQLFQGKSRIQRLNILNAKFAFNLYRVLKDQATSSDNIFIAPVGISTAMGMISLGLRGETHEEVHSVLHFKDFVNASSKYEVTTIHNLFRKLTHRLFRRNFGYTLQSVNDLYIQKQFPIREDFKAAMREFYFAEAQEADFSDPAFISKANSHILKLTKGLIKEALENTDSATQMMILNCIYFKGAWMNKFPVEMTHNHNFRLNEREVVKVSMMQTKGNFLAANDQELDCDILQLEYVGGISMLIVIPRKLSGMKTLEAQLTPQVVERWQKSMTNRTREVLLPKFKLEKNYNLVEVLKSMGITKLFNKNGNMSGISDQRIIIDLFKHQSTITVNEEGTQAAAVTTVGFMPLSTQVRFTVDRPFLFLVYEHRTSCLLFMGRVANPAKS.

The signal sequence occupies residues 1 to 23 (MKHPAYTLLLSLIMSMCAGSKGL). Asn31 is a glycosylation site (N-linked (GlcNAc...) asparagine). Repeat copies occupy residues 55–65 (GEEDDDYLDLE) and 69–79 (SEDDDYIYVVD). Residues 55–79 (GEEDDDYLDLEKLLSEDDDYIYVVD) form a 2 X 11 AA approximate repeats, Asp/Glu-rich (acidic) (hirudin-like) region. Residues Tyr61 and Tyr74 each carry the sulfotyrosine modification. Asn168 carries an N-linked (GlcNAc...) asparagine glycan. Residues 172–192 (KYEVTTIHNLFRKLTHRLFRR) form a glycosaminoglycan-binding site region. N-linked (GlcNAc...) asparagine glycans are attached at residues Asn367 and Asn403.

It belongs to the serpin family. In terms of processing, different composition of the N-linked oligosaccharides appears to yield a 68-kDa and a 72-kDa form.

Thrombin inhibitor activated by the glycosaminoglycans, heparin or dermatan sulfate. In the presence of the latter, HC-II becomes the predominant thrombin inhibitor in place of antithrombin III (AT). The polypeptide is Heparin cofactor 2 (Serpind1) (Rattus norvegicus (Rat)).